Reading from the N-terminus, the 168-residue chain is Putative postmeiotic segregation increased 2-like protein 3 (168 aa).

The 77-residue stretch at 8 to 84 (VSFKDVAVDF…EGEFPCQHSP (77 aa)) folds into the KRAB domain.

The protein belongs to the DNA mismatch repair MutL/HexB family.

The sequence is that of Putative postmeiotic segregation increased 2-like protein 3 (PMS2P3) from Homo sapiens (Human).